Here is a 134-residue protein sequence, read N- to C-terminus: Holo-[acyl-carrier-protein] synthase (134 aa).

Mg(2+)-binding residues include D8 and E56.

Belongs to the P-Pant transferase superfamily. AcpS family. It depends on Mg(2+) as a cofactor.

It is found in the cytoplasm. The catalysed reaction is apo-[ACP] + CoA = holo-[ACP] + adenosine 3',5'-bisphosphate + H(+). Functionally, transfers the 4'-phosphopantetheine moiety from coenzyme A to a Ser of acyl-carrier-protein. This chain is Holo-[acyl-carrier-protein] synthase, found in Clostridium kluyveri (strain ATCC 8527 / DSM 555 / NBRC 12016 / NCIMB 10680 / K1).